The following is a 511-amino-acid chain: Ribonuclease Y (511 aa).

The helical transmembrane segment at 3 to 23 threads the bilayer; that stretch reads VTIVASIACFIVGGILSYVLF. Positions 201-261 constitute a KH domain; the sequence is SVTVFHIESD…VRREIARLAL (61 aa). The HD domain occupies 327–420; sequence LLQHARETAN…VQVCDAISGA (94 aa).

The protein belongs to the RNase Y family.

It is found in the cell membrane. Its function is as follows. Endoribonuclease that initiates mRNA decay. The sequence is that of Ribonuclease Y from Bacteroides fragilis (strain ATCC 25285 / DSM 2151 / CCUG 4856 / JCM 11019 / LMG 10263 / NCTC 9343 / Onslow / VPI 2553 / EN-2).